The primary structure comprises 279 residues: Secreted RxLR effector protein 152 (279 aa).

The signal sequence occupies residues 1–22; that stretch reads MRNGSVLFGLFFIGHSCSVLLA. The RxLR-dEER signature appears at 47-62; sequence RTLQADDSERTLAEER.

The protein belongs to the RxLR effector family.

The protein resides in the secreted. The protein localises to the host nucleus. Secreted effector that completely suppresses the host cell death induced by cell death-inducing proteins. This chain is Secreted RxLR effector protein 152, found in Plasmopara viticola (Downy mildew of grapevine).